The sequence spans 1135 residues: DNA-directed RNA polymerase I subunit RPA2 (1135 aa).

The disordered stretch occupies residues 1–24 (MDPGSRWRNLPSGPSLKHLTDPSY). Arginine 180 contacts RNA. A loop B region spans residues 194 to 208 (IRPKWKTRGPGYTQY). The interval 236 to 247 (LNFIYRKELFFL) is loop A. Aspartate 367 contributes to the RNA binding site. 2 fork loop regions span residues 439-453 (LRSK…DSGL) and 474-489 (RGAD…VRRL). A Mg(2+)-binding site is contributed by aspartate 755. Residue lysine 890 coordinates RNA. DNA-binding residues include arginine 1020 and arginine 1036. Serine 1051 is subject to Phosphoserine. Residues cysteine 1070, cysteine 1073, cysteine 1098, and cysteine 1101 each coordinate Zn(2+). The segment at 1070–1101 (CVKCGSLLSPLLEKPPPSWSAMRNRKYNCTLC) adopts a C4-type zinc-finger fold.

This sequence belongs to the RNA polymerase beta chain family. As to quaternary structure, component of the RNA polymerase I (Pol I) complex consisting of 13 subunits: a ten-subunit catalytic core composed of POLR1A/RPA1, POLR1B/RPA2, POLR1C/RPAC1, POLR1D/RPAC2, POLR1H/RPA12, POLR2E/RPABC1, POLR2F/RPABC2, POLR2H/RPABC3, POLR2K/RPABC4 and POLR2L/RPABC5; a mobile stalk subunit POLR1F/RPA43 protruding from the core and additional subunits homologous to general transcription factors POLR1E/RPA49 and POLR1G/RPA34. Part of Pol I pre-initiation complex (PIC), in which Pol I core assembles with RRN3 and promoter-bound UTBF and SL1/TIF-IB complex. It depends on Mg(2+) as a cofactor.

The protein localises to the nucleus. The protein resides in the nucleolus. It is found in the chromosome. The enzyme catalyses RNA(n) + a ribonucleoside 5'-triphosphate = RNA(n+1) + diphosphate. In terms of biological role, catalytic core component of RNA polymerase I (Pol I), a DNA-dependent RNA polymerase which synthesizes ribosomal RNA precursors using the four ribonucleoside triphosphates as substrates. Transcribes 47S pre-rRNAs from multicopy rRNA gene clusters, giving rise to 5.8S, 18S and 28S ribosomal RNAs. Pol I-mediated transcription cycle proceeds through transcription initiation, transcription elongation and transcription termination stages. During transcription initiation, Pol I pre-initiation complex (PIC) is recruited by the selectivity factor 1 (SL1/TIF-IB) complex bound to the core promoter that precedes an rDNA repeat unit. The PIC assembly bends the promoter favoring the formation of the transcription bubble and promoter escape. Once the polymerase has escaped from the promoter it enters the elongation phase during which RNA is actively polymerized, based on complementarity with the template DNA strand. Highly processive, assembles in structures referred to as 'Miller trees' where many elongating Pol I complexes queue and transcribe the same rDNA coding regions. At terminator sequences downstream of the rDNA gene, PTRF interacts with Pol I and halts Pol I transcription leading to the release of the RNA transcript and polymerase from the DNA. Forms Pol I active center together with the largest subunit POLR1A/RPA1. Appends one nucleotide at a time to the 3' end of the nascent RNA, with POLR1A/RPA1 contributing a Mg(2+)-coordinating DxDGD motif, and POLR1B/RPA2 participating in the coordination of a second Mg(2+) ion and providing lysine residues believed to facilitate Watson-Crick base pairing between the incoming nucleotide and the template base. Typically, Mg(2+) ions direct a 5' nucleoside triphosphate to form a phosphodiester bond with the 3' hydroxyl of the preceding nucleotide of the nascent RNA, with the elimination of pyrophosphate. Has proofreading activity: Pauses and backtracks to allow the cleavage of a missincorporated nucleotide via POLR1H/RPA12. High Pol I processivity is associated with decreased transcription fidelity. This is DNA-directed RNA polymerase I subunit RPA2 from Homo sapiens (Human).